A 121-amino-acid chain; its full sequence is Basic phospholipase A2 homolog 2 (121 aa).

Cystine bridges form between Cys-26-Cys-115, Cys-28-Cys-44, Cys-43-Cys-95, Cys-49-Cys-121, Cys-50-Cys-88, Cys-57-Cys-81, and Cys-75-Cys-86. An important for membrane-damaging activities in eukaryotes and bacteria; heparin-binding region spans residues 105 to 117 (KKYRYHLKPLCKK).

The protein belongs to the phospholipase A2 family. Group II subfamily. K49 sub-subfamily. Homodimer; non-covalently linked (probable alternative/compact dimer conformation in solution). As to expression, expressed by the venom gland.

It is found in the secreted. Functionally, snake venom phospholipase A2 homolog that lacks enzymatic activity. Is myotoxic and displays edema-inducing activities in mouse paw. Also displays cytotoxic activity against myotubes. A model of myotoxic mechanism has been proposed: an apo Lys49-PLA2 is activated by the entrance of a hydrophobic molecule (e.g. fatty acid) at the hydrophobic channel of the protein leading to a reorientation of a monomer. This reorientation causes a transition between 'inactive' to 'active' states, causing alignment of C-terminal and membrane-docking sites (MDoS) side-by-side and putting the membrane-disruption sites (MDiS) in the same plane, exposed to solvent and in a symmetric position for both monomers. The MDoS region stabilizes the toxin on membrane by the interaction of charged residues with phospholipid head groups. Subsequently, the MDiS region destabilizes the membrane with penetration of hydrophobic residues. This insertion causes a disorganization of the membrane, allowing an uncontrolled influx of ions (i.e. calcium and sodium), and eventually triggering irreversible intracellular alterations and cell death. The polypeptide is Basic phospholipase A2 homolog 2 (Bothrops brazili (Brazil's lancehead)).